Consider the following 359-residue polypeptide: 5-formaminoimidazole-4-carboxamide-1-(beta)-D-ribofuranosyl 5'-monophosphate synthetase (359 aa).

Residues histidine 27 and serine 94 each coordinate 5-amino-1-(5-phospho-beta-D-ribosyl)imidazole-4-carboxamide. In terms of domain architecture, ATP-grasp spans 116 to 340 (RRLLRWESER…FGEIVTMGRR (225 aa)). ATP-binding positions include 146–208 (PEDI…TNFC) and glutamate 230. Asparagine 258 lines the 5-amino-1-(5-phospho-beta-D-ribosyl)imidazole-4-carboxamide pocket. Glutamine 297 and glutamate 310 together coordinate Mg(2+).

The protein belongs to the phosphohexose mutase family. Mg(2+) serves as cofactor. Mn(2+) is required as a cofactor.

The catalysed reaction is 5-amino-1-(5-phospho-beta-D-ribosyl)imidazole-4-carboxamide + formate + ATP = 5-formamido-1-(5-phospho-D-ribosyl)imidazole-4-carboxamide + ADP + phosphate. The protein operates within purine metabolism; IMP biosynthesis via de novo pathway; 5-formamido-1-(5-phospho-D-ribosyl)imidazole-4-carboxamide from 5-amino-1-(5-phospho-D-ribosyl)imidazole-4-carboxamide (formate route): step 1/1. Functionally, catalyzes the ATP- and formate-dependent formylation of 5-aminoimidazole-4-carboxamide-1-beta-d-ribofuranosyl 5'-monophosphate (AICAR) to 5-formaminoimidazole-4-carboxamide-1-beta-d-ribofuranosyl 5'-monophosphate (FAICAR) in the absence of folates. The sequence is that of 5-formaminoimidazole-4-carboxamide-1-(beta)-D-ribofuranosyl 5'-monophosphate synthetase from Methanopyrus kandleri (strain AV19 / DSM 6324 / JCM 9639 / NBRC 100938).